The sequence spans 144 residues: MDYRESTGESQSKYKGIRRRKWGKWVSEIRVPGTRDRLWLGSFSTAEGAAVAHDVAFFCLHQPDSLESLNFPHLLNPSLVSRTSPRSIQQAASNAGMAIDAGIVHSTSVNSGCGDTTTYYENGADQVEPLNISVYDYLGGHDHV.

Positions lysine 13 to proline 72 form a DNA-binding region, AP2/ERF.

This sequence belongs to the AP2/ERF transcription factor family. ERF subfamily.

The protein resides in the nucleus. In terms of biological role, probably acts as a transcriptional activator. Binds to the GCC-box pathogenesis-related promoter element. May be involved in the regulation of gene expression by stress factors and by components of stress signal transduction pathways. In Arabidopsis thaliana (Mouse-ear cress), this protein is Ethylene-responsive transcription factor ERF019 (ERF019).